A 506-amino-acid polypeptide reads, in one-letter code: Histidine ammonia-lyase (506 aa).

Residues 143 to 145 constitute a cross-link (5-imidazolinone (Ala-Gly)); sequence ASG. The residue at position 144 (Ser144) is a 2,3-didehydroalanine (Ser).

This sequence belongs to the PAL/histidase family. Contains an active site 4-methylidene-imidazol-5-one (MIO), which is formed autocatalytically by cyclization and dehydration of residues Ala-Ser-Gly.

It is found in the cytoplasm. The catalysed reaction is L-histidine = trans-urocanate + NH4(+). Its pathway is amino-acid degradation; L-histidine degradation into L-glutamate; N-formimidoyl-L-glutamate from L-histidine: step 1/3. The chain is Histidine ammonia-lyase from Salmonella agona (strain SL483).